Consider the following 433-residue polypeptide: GTPase Obg (433 aa).

The Obg domain occupies 1 to 158 (MFVDQVKIYV…RNVILELKLL (158 aa)). Residues 159–329 (ADVGLVGFPS…LLFAIADLLE (171 aa)) form the OBG-type G domain. Residues 165 to 172 (GFPSVGKS), 190 to 194 (FTTLV), 212 to 215 (DLPG), 282 to 285 (NKMD), and 310 to 312 (SAA) contribute to the GTP site. Ser172 and Thr192 together coordinate Mg(2+). The region spanning 350-428 (KYEKEELPFT…LLDYEFEFVD (79 aa)) is the OCT domain.

Belongs to the TRAFAC class OBG-HflX-like GTPase superfamily. OBG GTPase family. In terms of assembly, monomer. Requires Mg(2+) as cofactor.

The protein localises to the cytoplasm. Functionally, an essential GTPase which binds GTP, GDP and possibly (p)ppGpp with moderate affinity, with high nucleotide exchange rates and a fairly low GTP hydrolysis rate. Plays a role in control of the cell cycle, stress response, ribosome biogenesis and in those bacteria that undergo differentiation, in morphogenesis control. This is GTPase Obg from Geobacillus thermodenitrificans (strain NG80-2).